Consider the following 159-residue polypeptide: Large ribosomal subunit protein uL11 (159 aa).

The interval 1–26 (MAGTIEVLVPGGKANPGPPLGPELGP) is disordered.

This sequence belongs to the universal ribosomal protein uL11 family. Part of the ribosomal stalk of the 50S ribosomal subunit. Interacts with L10 and the large rRNA to form the base of the stalk. L10 forms an elongated spine to which L12 dimers bind in a sequential fashion forming a multimeric L10(L12)X complex.

Forms part of the ribosomal stalk which helps the ribosome interact with GTP-bound translation factors. The sequence is that of Large ribosomal subunit protein uL11 from Haloferax volcanii (strain ATCC 29605 / DSM 3757 / JCM 8879 / NBRC 14742 / NCIMB 2012 / VKM B-1768 / DS2) (Halobacterium volcanii).